The chain runs to 568 residues: Lariat debranching enzyme (568 aa).

Residues Cys-8, His-10, Asp-39, and Asn-84 each coordinate a divalent metal cation. The tract at residues 124 to 154 is lariat recognition loop; it reads SGIFKSHDFKKGHFEFPPYNPETLRSVYHIR. Residues His-174, His-226, and His-228 each contribute to the a divalent metal cation site. Residues 388-568 are disordered; the sequence is IYGERGGKGA…TAVEDEESDS (181 aa). Positions 417–428 are enriched in polar residues; sequence PSDTSGLSSSYN. Residues 432 to 444 are compositionally biased toward acidic residues; sequence ITIEDEWEEEEDG. Positions 467 to 480 are enriched in basic and acidic residues; it reads DSDRDSSPQRETAK. At Thr-478 the chain carries Phosphothreonine. Residues 534 to 549 are compositionally biased toward low complexity; it reads GETTQSSAGQTGGTPQ. Residue Ser-568 is modified to Phosphoserine.

This sequence belongs to the lariat debranching enzyme family. The cofactor is Fe(2+). Zn(2+) serves as cofactor. It depends on Mn(2+) as a cofactor.

It is found in the nucleus. Active in presence of diverse metals including Fe(2+), Zn(2+), Mn(2+). Also activated by Ca(2+). Binds two metal cations in two adjacent alpha and beta metal-binding pockets. Cleaves the 2'-5' phosphodiester linkage at the branch point of excised lariat intron RNA and converts them into linear molecules that can be subsequently degraded, thereby facilitating ribonucleotide turnover. Linked to its role in pre-mRNA processing mechanism, may also participate in retrovirus replication and have an antiviral cell-intrinsic defense function. In Danio rerio (Zebrafish), this protein is Lariat debranching enzyme (dbr1).